We begin with the raw amino-acid sequence, 756 residues long: Ribosomal RNA large subunit methyltransferase K/L (756 aa).

In terms of domain architecture, THUMP spans threonine 46 to leucine 157. The segment covering glutamate 395 to alanine 409 has biased composition (basic and acidic residues). The tract at residues glutamate 395–glutamate 441 is disordered.

It belongs to the methyltransferase superfamily. RlmKL family.

Its subcellular location is the cytoplasm. It catalyses the reaction guanosine(2445) in 23S rRNA + S-adenosyl-L-methionine = N(2)-methylguanosine(2445) in 23S rRNA + S-adenosyl-L-homocysteine + H(+). The enzyme catalyses guanosine(2069) in 23S rRNA + S-adenosyl-L-methionine = N(2)-methylguanosine(2069) in 23S rRNA + S-adenosyl-L-homocysteine + H(+). In terms of biological role, specifically methylates the guanine in position 2445 (m2G2445) and the guanine in position 2069 (m7G2069) of 23S rRNA. The polypeptide is Ribosomal RNA large subunit methyltransferase K/L (Pseudomonas fluorescens (strain Pf0-1)).